The following is a 433-amino-acid chain: Probable imidazolonepropionase (433 aa).

Residues Tyr160 and His193 each contribute to the 4-imidazolone-5-propanoate site. Tyr160 provides a ligand contact to N-formimidoyl-L-glutamate. His261 serves as a coordination point for Fe(3+). Residue His261 coordinates Zn(2+). Glu264 serves as a coordination point for 4-imidazolone-5-propanoate. Asp335 lines the Fe(3+) pocket. Residue Asp335 coordinates Zn(2+). An N-formimidoyl-L-glutamate-binding site is contributed by Asn337.

It belongs to the metallo-dependent hydrolases superfamily. HutI family. It depends on Zn(2+) as a cofactor. The cofactor is Fe(3+).

The catalysed reaction is 4-imidazolone-5-propanoate + H2O = N-formimidoyl-L-glutamate. It functions in the pathway amino-acid degradation; L-histidine degradation into L-glutamate; N-formimidoyl-L-glutamate from L-histidine: step 3/3. This is Probable imidazolonepropionase (amdhd1) from Danio rerio (Zebrafish).